Consider the following 443-residue polypeptide: UDP-N-acetylglucosamine 1-carboxyvinyltransferase 1 (443 aa).

Position 22–23 (22–23) interacts with phosphoenolpyruvate; that stretch reads KN. Residue Arg-95 coordinates UDP-N-acetyl-alpha-D-glucosamine. Cys-119 acts as the Proton donor in catalysis. 2-(S-cysteinyl)pyruvic acid O-phosphothioketal is present on Cys-119. UDP-N-acetyl-alpha-D-glucosamine contacts are provided by residues 124-128, Asp-308, and Val-330; that span reads RPIDL.

Belongs to the EPSP synthase family. MurA subfamily.

It is found in the cytoplasm. It catalyses the reaction phosphoenolpyruvate + UDP-N-acetyl-alpha-D-glucosamine = UDP-N-acetyl-3-O-(1-carboxyvinyl)-alpha-D-glucosamine + phosphate. It functions in the pathway cell wall biogenesis; peptidoglycan biosynthesis. Functionally, cell wall formation. Adds enolpyruvyl to UDP-N-acetylglucosamine. The protein is UDP-N-acetylglucosamine 1-carboxyvinyltransferase 1 of Oceanobacillus iheyensis (strain DSM 14371 / CIP 107618 / JCM 11309 / KCTC 3954 / HTE831).